The primary structure comprises 295 residues: Diaminopimelate epimerase (295 aa).

Substrate is bound by residues Asn-13 and Asn-69. The active-site Proton donor is Cys-78. Substrate is bound by residues 79-80, Asn-173, Asn-212, and 230-231; these read GN and ER. The active-site Proton acceptor is Cys-239. 240 to 241 is a substrate binding site; it reads GT.

This sequence belongs to the diaminopimelate epimerase family. Homodimer.

The protein localises to the cytoplasm. It catalyses the reaction (2S,6S)-2,6-diaminopimelate = meso-2,6-diaminopimelate. It functions in the pathway amino-acid biosynthesis; L-lysine biosynthesis via DAP pathway; DL-2,6-diaminopimelate from LL-2,6-diaminopimelate: step 1/1. In terms of biological role, catalyzes the stereoinversion of LL-2,6-diaminopimelate (L,L-DAP) to meso-diaminopimelate (meso-DAP), a precursor of L-lysine. The protein is Diaminopimelate epimerase of Methanococcus aeolicus (strain ATCC BAA-1280 / DSM 17508 / OCM 812 / Nankai-3).